Reading from the N-terminus, the 1252-residue chain is DNA-directed RNA polymerase subunit beta (1252 aa).

Belongs to the RNA polymerase beta chain family. In terms of assembly, the RNAP catalytic core consists of 2 alpha, 1 beta, 1 beta' and 1 omega subunit. When a sigma factor is associated with the core the holoenzyme is formed, which can initiate transcription.

It carries out the reaction RNA(n) + a ribonucleoside 5'-triphosphate = RNA(n+1) + diphosphate. Functionally, DNA-dependent RNA polymerase catalyzes the transcription of DNA into RNA using the four ribonucleoside triphosphates as substrates. The polypeptide is DNA-directed RNA polymerase subunit beta (Chlamydia caviae (strain ATCC VR-813 / DSM 19441 / 03DC25 / GPIC) (Chlamydophila caviae)).